A 292-amino-acid chain; its full sequence is Brix domain-containing protein ZK795.3 (292 aa).

The 182-residue stretch at 78–259 (PKIVITTSRD…PYQIKLGTLE (182 aa)) folds into the Brix domain.

In Caenorhabditis elegans, this protein is Brix domain-containing protein ZK795.3.